The sequence spans 166 residues: Protein-export protein SecB (166 aa).

The protein belongs to the SecB family. In terms of assembly, homotetramer, a dimer of dimers. One homotetramer interacts with 1 SecA dimer.

Its subcellular location is the cytoplasm. Its function is as follows. One of the proteins required for the normal export of preproteins out of the cell cytoplasm. It is a molecular chaperone that binds to a subset of precursor proteins, maintaining them in a translocation-competent state. It also specifically binds to its receptor SecA. This chain is Protein-export protein SecB, found in Roseobacter denitrificans (strain ATCC 33942 / OCh 114) (Erythrobacter sp. (strain OCh 114)).